Here is a 145-residue protein sequence, read N- to C-terminus: Hemoglobin subunit beta (145 aa).

The Globin domain maps to 1–145 (MLTAEEKAAV…VANALAHRYH (145 aa)). Threonine 11 carries the post-translational modification Phosphothreonine. Lysine 58 is modified (N6-acetyllysine). Position 62 (histidine 62) interacts with heme b. Lysine 81 is modified (N6-acetyllysine). Histidine 91 is a binding site for heme b. Position 92 is an S-nitrosocysteine (cysteine 92).

This sequence belongs to the globin family. Heterotetramer of two alpha chains and two beta chains. Red blood cells.

Its function is as follows. Involved in oxygen transport from the lung to the various peripheral tissues. This Ovis aries musimon (Mouflon) protein is Hemoglobin subunit beta (HBB).